The primary structure comprises 351 residues: Tropomodulin-2 (351 aa).

Position 25 is a phosphoserine (serine 25).

This sequence belongs to the tropomodulin family. In terms of assembly, binds to the N-terminus of tropomyosin and to actin. Binds to TMBr3 as well as to other low molecular mass tropomyosins (TM5a or TM5), but not to high molecular mass tropomyosins (TM2 or TMBr1). In terms of tissue distribution, neuronal-tissue specific.

It localises to the cytoplasm. Its subcellular location is the cytoskeleton. Blocks the elongation and depolymerization of the actin filaments at the pointed end. The Tmod/TM complex contributes to the formation of the short actin protofilament, which in turn defines the geometry of the membrane skeleton. This is Tropomodulin-2 (Tmod2) from Rattus norvegicus (Rat).